The following is a 66-amino-acid chain: Large ribosomal subunit protein bL35 (66 aa).

Belongs to the bacterial ribosomal protein bL35 family.

This is Large ribosomal subunit protein bL35 from Neorickettsia sennetsu (strain ATCC VR-367 / Miyayama) (Ehrlichia sennetsu).